The sequence spans 218 residues: Probable carboxylesterase clz11 (218 aa).

Positions 7–9 (LVG) match the Involved in the stabilization of the negatively charged intermediate by the formation of the oxyanion hole motif. Residue serine 77 is part of the active site.

It belongs to the 'GDXG' lipolytic enzyme family.

It carries out the reaction a carboxylic ester + H2O = an alcohol + a carboxylate + H(+). The protein operates within secondary metabolite biosynthesis. Functionally, probable carboxylesterase; part of the gene cluster that mediates the biosynthesis of squalestatin S1 (SQS1, also known as zaragozic acid A), a heavily oxidized fungal polyketide that offers potent cholesterol lowering activity by targeting squalene synthase (SS). SQS1 is composed of a 2,8-dioxobicyclic[3.2.1]octane-3,4,5-tricarboxyclic acid core that is connected to two lipophilic polyketide arms. These initial steps feature the priming of an unusual benzoic acid starter unit onto the highly reducing polyketide synthase clz14, followed by oxaloacetate extension and product release to generate a tricarboxylic acid containing product. The phenylalanine ammonia lyase (PAL) clz10 and the acyl-CoA ligase clz12 are involved in transforming phenylalanine into benzoyl-CoA. The citrate synthase-like protein clz17 is involved in connecting the C-alpha-carbons of the hexaketide chain and oxaloacetate to afford the tricarboxylic acid unit. The potential hydrolytic enzymes, clz11 and clz13, are in close proximity to pks2 and may participate in product release. On the other side, the tetraketide arm is synthesized by a the squalestatin tetraketide synthase clz2 and enzymatically esterified to the core in the last biosynthetic step, by the acetyltransferase clz6. The biosynthesis of the tetraketide must involve 3 rounds of chain extension. After the first and second rounds methyl-transfer occurs, and in all rounds of extension the ketoreductase and dehydratase are active. The enoyl reductase and C-MeT of clz2 are not active in the final round of extension. The acetyltransferase clz6 appears to have a broad substrate selectivity for its acyl CoA substrate, allowing the in vitro synthesis of novel squalestatins. The biosynthesis of SQS1 requires several oxidative steps likely performed by oxidoreductases clz3, clz15 and clz16. Finally, in support of the identification of the cluster as being responsible for SQS1 production, the cluster contains a gene encoding a putative squalene synthase (SS) clz20, suggesting a likely mechanism for self-resistance. This Cochliobolus lunatus (Filamentous fungus) protein is Probable carboxylesterase clz11.